A 131-amino-acid chain; its full sequence is Ribonuclease P protein component (131 aa).

This sequence belongs to the RnpA family. Consists of a catalytic RNA component (M1 or rnpB) and a protein subunit.

The enzyme catalyses Endonucleolytic cleavage of RNA, removing 5'-extranucleotides from tRNA precursor.. In terms of biological role, RNaseP catalyzes the removal of the 5'-leader sequence from pre-tRNA to produce the mature 5'-terminus. It can also cleave other RNA substrates such as 4.5S RNA. The protein component plays an auxiliary but essential role in vivo by binding to the 5'-leader sequence and broadening the substrate specificity of the ribozyme. The polypeptide is Ribonuclease P protein component (Cyanothece sp. (strain PCC 7425 / ATCC 29141)).